We begin with the raw amino-acid sequence, 204 residues long: Dephospho-CoA kinase (204 aa).

Positions 5–204 constitute a DPCK domain; it reads VVGLTGGIGS…YLANLVKAML (200 aa). Residue 13-18 participates in ATP binding; it reads GSGKSA.

The protein belongs to the CoaE family.

It is found in the cytoplasm. The enzyme catalyses 3'-dephospho-CoA + ATP = ADP + CoA + H(+). It participates in cofactor biosynthesis; coenzyme A biosynthesis; CoA from (R)-pantothenate: step 5/5. Functionally, catalyzes the phosphorylation of the 3'-hydroxyl group of dephosphocoenzyme A to form coenzyme A. In Chromobacterium violaceum (strain ATCC 12472 / DSM 30191 / JCM 1249 / CCUG 213 / NBRC 12614 / NCIMB 9131 / NCTC 9757 / MK), this protein is Dephospho-CoA kinase.